The sequence spans 864 residues: Alanine--tRNA ligase (864 aa).

Residues His-534, His-538, Cys-639, and His-643 each coordinate Zn(2+).

This sequence belongs to the class-II aminoacyl-tRNA synthetase family. It depends on Zn(2+) as a cofactor.

The protein localises to the cytoplasm. The enzyme catalyses tRNA(Ala) + L-alanine + ATP = L-alanyl-tRNA(Ala) + AMP + diphosphate. Functionally, catalyzes the attachment of alanine to tRNA(Ala) in a two-step reaction: alanine is first activated by ATP to form Ala-AMP and then transferred to the acceptor end of tRNA(Ala). Also edits incorrectly charged Ser-tRNA(Ala) and Gly-tRNA(Ala) via its editing domain. This chain is Alanine--tRNA ligase, found in Aster yellows witches'-broom phytoplasma (strain AYWB).